The chain runs to 421 residues: Ribosomal RNA large subunit methyltransferase G (421 aa).

The interval 389–421 (EPELEQESDLNSKLDANTEVPHPQSALYGKPKA) is disordered.

It belongs to the methyltransferase superfamily. RlmG family.

Its subcellular location is the cytoplasm. The catalysed reaction is guanosine(1835) in 23S rRNA + S-adenosyl-L-methionine = N(2)-methylguanosine(1835) in 23S rRNA + S-adenosyl-L-homocysteine + H(+). Specifically methylates the guanine in position 1835 (m2G1835) of 23S rRNA. In Shewanella halifaxensis (strain HAW-EB4), this protein is Ribosomal RNA large subunit methyltransferase G.